A 96-amino-acid polypeptide reads, in one-letter code: Antigen H4 (96 aa).

The tract at residues 1–20 is disordered; sequence EFQEEIKEGVEEHKHEDDPE. Asparagine 34 carries an N-linked (GlcNAc...) asparagine glycan.

The polypeptide is Antigen H4 (H4) (Toxoplasma gondii).